Reading from the N-terminus, the 361-residue chain is Glucose 1-dehydrogenase (361 aa).

Position 41 (Cys-41) interacts with Zn(2+). Thr-43 contacts substrate. The Zn(2+) site is built by His-68 and Glu-69. Glu-119, Glu-156, and Asn-160 together coordinate substrate. Residue Glu-156 coordinates Zn(2+). NADP(+)-binding positions include 216 to 218 (NRH), 275 to 277 (FGT), 304 to 306 (SVD), and Lys-349. Asp-306 is a substrate binding site.

Belongs to the zinc-containing alcohol dehydrogenase family. Glucose 1-dehydrogenase subfamily. Homotetramer. Zn(2+) is required as a cofactor.

It carries out the reaction D-glucose + NAD(+) = D-glucono-1,5-lactone + NADH + H(+). The enzyme catalyses D-glucose + NADP(+) = D-glucono-1,5-lactone + NADPH + H(+). The catalysed reaction is D-galactose + NAD(+) = D-galactono-1,4-lactone + NADH + H(+). It catalyses the reaction D-galactose + NADP(+) = D-galactono-1,5-lactone + NADPH + H(+). Its function is as follows. Catalyzes the NAD(P)(+)-dependent oxidation of D-glucose to D-gluconate via gluconolactone. Is also significantly active with galactose as substrate, but not with mannose or glucose 6-phosphate. Can utilize both NAD(+) and NADP(+) as electron acceptor, with a marked preference for NADP(+). Physiologically, may be involved in the degradation of both glucose and galactose through a non-phosphorylative variant of the Entner-Doudoroff pathway. In Thermoplasma acidophilum (strain ATCC 25905 / DSM 1728 / JCM 9062 / NBRC 15155 / AMRC-C165), this protein is Glucose 1-dehydrogenase.